We begin with the raw amino-acid sequence, 235 residues long: UPF0502 protein Bmul_3231/BMULJ_05293 (235 aa).

The protein belongs to the UPF0502 family.

This Burkholderia multivorans (strain ATCC 17616 / 249) protein is UPF0502 protein Bmul_3231/BMULJ_05293.